Consider the following 196-residue polypeptide: Xanthine phosphoribosyltransferase (196 aa).

Residues leucine 20 and asparagine 27 each contribute to the xanthine site. A 5-phospho-alpha-D-ribose 1-diphosphate-binding site is contributed by 128 to 132 (ATGAA). Position 156 (lysine 156) interacts with xanthine.

The protein belongs to the purine/pyrimidine phosphoribosyltransferase family. Xpt subfamily. In terms of assembly, homodimer.

It is found in the cytoplasm. It carries out the reaction XMP + diphosphate = xanthine + 5-phospho-alpha-D-ribose 1-diphosphate. It functions in the pathway purine metabolism; XMP biosynthesis via salvage pathway; XMP from xanthine: step 1/1. Functionally, converts the preformed base xanthine, a product of nucleic acid breakdown, to xanthosine 5'-monophosphate (XMP), so it can be reused for RNA or DNA synthesis. This chain is Xanthine phosphoribosyltransferase, found in Brevibacillus brevis (strain 47 / JCM 6285 / NBRC 100599).